A 931-amino-acid polypeptide reads, in one-letter code: GPI ethanolamine phosphate transferase 1 (931 aa).

A topological domain (cytoplasmic) is located at residue M1. The chain crosses the membrane as a helical span at residues L2–I22. The Lumenal portion of the chain corresponds to Y23–F442. N128, N192, N295, and N350 each carry an N-linked (GlcNAc...) asparagine glycan. A helical membrane pass occupies residues L443 to I463. Topologically, residues K464 to P480 are cytoplasmic. The chain crosses the membrane as a helical span at residues H481 to I501. Residue Q502 is a topological domain, lumenal. A helical membrane pass occupies residues A503–L523. Over R524–H543 the chain is Cytoplasmic. The helical transmembrane segment at F544–Y564 threads the bilayer. A topological domain (lumenal) is located at residue R565. The helical transmembrane segment at Y566–T586 threads the bilayer. The Cytoplasmic portion of the chain corresponds to R587 to T591. A helical membrane pass occupies residues F592–G612. Residues R613–S618 lie on the Lumenal side of the membrane. The N-linked (GlcNAc...) asparagine glycan is linked to N616. A helical membrane pass occupies residues L619–G639. Over K640–E649 the chain is Cytoplasmic. The helical transmembrane segment at L650–T670 threads the bilayer. The Lumenal segment spans residues H671–Q685. Residues I686–L706 form a helical membrane-spanning segment. Residues S707–L723 lie on the Cytoplasmic side of the membrane. Residues L724–I744 traverse the membrane as a helical segment. Residues Q745 to R786 are Lumenal-facing. A helical membrane pass occupies residues A787–I807. The Cytoplasmic segment spans residues N808 to P824. The chain crosses the membrane as a helical span at residues F825–A845. The Lumenal segment spans residues F846 to K858. A helical membrane pass occupies residues G859–V879. Topologically, residues K880–H894 are cytoplasmic. The helical transmembrane segment at Y895 to L915 threads the bilayer. The Lumenal portion of the chain corresponds to T916–M931.

The protein belongs to the PIGG/PIGN/PIGO family. PIGN subfamily.

It is found in the endoplasmic reticulum membrane. It participates in glycolipid biosynthesis; glycosylphosphatidylinositol-anchor biosynthesis. Functionally, ethanolamine phosphate transferase that catalyzes an ethanolamine phosphate (EtNP) transfer from phosphatidylethanolamine (PE) to the 2-OH position of the first alpha-1,4-linked mannose of the alpha-D-Man-(1-&gt;6)-alpha-D-Man-(1-&gt;4)-alpha-D-GlcN-(1-&gt;6)-(1-radyl,2-acyl-sn-glycero-3-phospho)-2-acyl-inositol (also termed H3) intermediate to generate an alpha-D-Man-(1-&gt;6)-2-PEtn-alpha-D-Man-(1-&gt;4)-alpha-D-GlcN-(1-&gt;6)-(1-radyl,2-acyl-sn-glycero-3-phospho)-2-acyl-inositol and participates in the eighth step of the glycosylphosphatidylinositol-anchor biosynthesis. May act as suppressor of replication stress and chromosome missegregation. This Mus musculus (Mouse) protein is GPI ethanolamine phosphate transferase 1.